The primary structure comprises 781 residues: Probable beta-D-xylosidase 5 (781 aa).

The signal sequence occupies residues 1 to 23; sequence MSIRRFVRLSLLIIALVSSLCES. Residues Asn-43, Asn-103, and Asn-123 are each glycosylated (N-linked (GlcNAc...) asparagine). The active site involves Asp-291. N-linked (GlcNAc...) asparagine glycans are attached at residues Asn-342, Asn-424, Asn-504, Asn-543, Asn-601, and Asn-653.

The protein belongs to the glycosyl hydrolase 3 family.

The protein resides in the secreted. It localises to the extracellular space. The protein localises to the extracellular matrix. This chain is Probable beta-D-xylosidase 5 (BXL5), found in Arabidopsis thaliana (Mouse-ear cress).